Consider the following 243-residue polypeptide: Urease accessory protein UreF 2 (243 aa).

It belongs to the UreF family. In terms of assembly, ureD, UreF and UreG form a complex that acts as a GTP-hydrolysis-dependent molecular chaperone, activating the urease apoprotein by helping to assemble the nickel containing metallocenter of UreC. The UreE protein probably delivers the nickel.

It localises to the cytoplasm. Functionally, required for maturation of urease via the functional incorporation of the urease nickel metallocenter. Disrupting the ure2 operon has no effect on urease activity or pathogen survival in BALB/c mice when administered orally. This is Urease accessory protein UreF 2 from Brucella abortus (strain 2308).